A 131-amino-acid polypeptide reads, in one-letter code: Small ribosomal subunit protein uS8 (131 aa).

The protein belongs to the universal ribosomal protein uS8 family. Part of the 30S ribosomal subunit. Contacts proteins S5 and S12.

Its function is as follows. One of the primary rRNA binding proteins, it binds directly to 16S rRNA central domain where it helps coordinate assembly of the platform of the 30S subunit. In Dictyoglomus thermophilum (strain ATCC 35947 / DSM 3960 / H-6-12), this protein is Small ribosomal subunit protein uS8.